The sequence spans 516 residues: Methionine--tRNA ligase (516 aa).

Positions 14–24 match the 'HIGH' region motif; it reads SYPNGKPHIGH. A 'KMSKS' region motif is present at residues 302–306; the sequence is KMSKS. Lysine 305 contacts ATP.

The protein belongs to the class-I aminoacyl-tRNA synthetase family. MetG type 2B subfamily. As to quaternary structure, monomer.

The protein resides in the cytoplasm. The catalysed reaction is tRNA(Met) + L-methionine + ATP = L-methionyl-tRNA(Met) + AMP + diphosphate. Its function is as follows. Is required not only for elongation of protein synthesis but also for the initiation of all mRNA translation through initiator tRNA(fMet) aminoacylation. The chain is Methionine--tRNA ligase from Rhizobium meliloti (strain 1021) (Ensifer meliloti).